An 87-amino-acid chain; its full sequence is Small ribosomal subunit protein bS18 (87 aa).

A compositionally biased stretch (basic residues) spans Met-1–Arg-19. The disordered stretch occupies residues Met-1–Val-25.

This sequence belongs to the bacterial ribosomal protein bS18 family. Part of the 30S ribosomal subunit. Forms a tight heterodimer with protein bS6.

Binds as a heterodimer with protein bS6 to the central domain of the 16S rRNA, where it helps stabilize the platform of the 30S subunit. The polypeptide is Small ribosomal subunit protein bS18 (Rhodopirellula baltica (strain DSM 10527 / NCIMB 13988 / SH1)).